The sequence spans 389 residues: Succinate--CoA ligase [ADP-forming] subunit beta (389 aa).

An ATP-grasp domain is found at 9–244; that stretch reads KQLLAEYGIP…KTQEDETEVT (236 aa). Residues K46, 53–55, G102, and E107 each bind ATP; that span reads GRG. N199 and D213 together coordinate Mg(2+). Substrate-binding positions include N264 and 321–323; that span reads GIV.

This sequence belongs to the succinate/malate CoA ligase beta subunit family. In terms of assembly, heterotetramer of two alpha and two beta subunits. The cofactor is Mg(2+).

It catalyses the reaction succinate + ATP + CoA = succinyl-CoA + ADP + phosphate. It carries out the reaction GTP + succinate + CoA = succinyl-CoA + GDP + phosphate. It functions in the pathway carbohydrate metabolism; tricarboxylic acid cycle; succinate from succinyl-CoA (ligase route): step 1/1. In terms of biological role, succinyl-CoA synthetase functions in the citric acid cycle (TCA), coupling the hydrolysis of succinyl-CoA to the synthesis of either ATP or GTP and thus represents the only step of substrate-level phosphorylation in the TCA. The beta subunit provides nucleotide specificity of the enzyme and binds the substrate succinate, while the binding sites for coenzyme A and phosphate are found in the alpha subunit. This is Succinate--CoA ligase [ADP-forming] subunit beta from Xanthomonas campestris pv. campestris (strain 8004).